The sequence spans 106 residues: Putative protein SH (106 aa).

The segment at 48 to 106 (HSQQNNSGHQFGDRFHSKGHQDTEGRILWKEASTRTTDSTETADTQLVQRQGNGGICLS) is disordered. Positions 58–80 (FGDRFHSKGHQDTEGRILWKEAS) are enriched in basic and acidic residues. The segment covering 81–92 (TRTTDSTETADT) has biased composition (low complexity).

Heart.

In terms of biological role, may be involved with the regulation of GNRH gene expression. It is not known if this protein is transcribed. The sequence is that of Putative protein SH from Rattus norvegicus (Rat).